The chain runs to 272 residues: Glutamate racemase (272 aa).

Substrate contacts are provided by residues 16–17 (DS) and 48–49 (YG). Cys79 acts as the Proton donor/acceptor in catalysis. Residue 80 to 81 (NT) participates in substrate binding. The Proton donor/acceptor role is filled by Cys191. 192 to 193 (TH) lines the substrate pocket.

The protein belongs to the aspartate/glutamate racemases family.

It catalyses the reaction L-glutamate = D-glutamate. The protein operates within cell wall biogenesis; peptidoglycan biosynthesis. Its function is as follows. Provides the (R)-glutamate required for cell wall biosynthesis. This is Glutamate racemase from Chlorobium phaeobacteroides (strain DSM 266 / SMG 266 / 2430).